Here is a 221-residue protein sequence, read N- to C-terminus: Iron-sulfur cluster repair protein YtfE (221 aa).

It belongs to the RIC family. YtfE subfamily. In terms of assembly, homodimer.

It is found in the cytoplasm. Di-iron-containing protein involved in the repair of iron-sulfur clusters damaged by oxidative and nitrosative stress conditions. In Yersinia pestis bv. Antiqua (strain Antiqua), this protein is Iron-sulfur cluster repair protein YtfE.